A 156-amino-acid polypeptide reads, in one-letter code: UPF0178 protein Jann_2168 (156 aa).

This sequence belongs to the UPF0178 family.

This is UPF0178 protein Jann_2168 from Jannaschia sp. (strain CCS1).